We begin with the raw amino-acid sequence, 452 residues long: Pup--protein ligase (452 aa).

Glu9 lines the Mg(2+) pocket. ATP is bound at residue Arg53. Tyr55 contacts Mg(2+). The active-site Proton acceptor is the Asp57. A Mg(2+)-binding site is contributed by Glu63. Positions 66 and 419 each coordinate ATP.

The protein belongs to the Pup ligase/Pup deamidase family. Pup-conjugating enzyme subfamily.

It carries out the reaction ATP + [prokaryotic ubiquitin-like protein]-L-glutamate + [protein]-L-lysine = ADP + phosphate + N(6)-([prokaryotic ubiquitin-like protein]-gamma-L-glutamyl)-[protein]-L-lysine.. It functions in the pathway protein degradation; proteasomal Pup-dependent pathway. Its pathway is protein modification; protein pupylation. Functionally, catalyzes the covalent attachment of the prokaryotic ubiquitin-like protein modifier Pup to the proteasomal substrate proteins, thereby targeting them for proteasomal degradation. This tagging system is termed pupylation. The ligation reaction involves the side-chain carboxylate of the C-terminal glutamate of Pup and the side-chain amino group of a substrate lysine. This Nocardia farcinica (strain IFM 10152) protein is Pup--protein ligase.